Here is a 214-residue protein sequence, read N- to C-terminus: Ion-translocating oxidoreductase complex subunit G (214 aa).

A helical membrane pass occupies residues 13 to 33 (ALLLGLFALVGVGLVALVQQF). Thr-180 is subject to FMN phosphoryl threonine.

Belongs to the RnfG family. In terms of assembly, the complex is composed of six subunits: RnfA, RnfB, RnfC, RnfD, RnfE and RnfG. FMN serves as cofactor.

Its subcellular location is the cell inner membrane. Its function is as follows. Part of a membrane-bound complex that couples electron transfer with translocation of ions across the membrane. This is Ion-translocating oxidoreductase complex subunit G from Pseudomonas aeruginosa (strain UCBPP-PA14).